Reading from the N-terminus, the 120-residue chain is Large ribosomal subunit protein uL22 (120 aa).

This sequence belongs to the universal ribosomal protein uL22 family. In terms of assembly, part of the 50S ribosomal subunit.

Its function is as follows. This protein binds specifically to 23S rRNA; its binding is stimulated by other ribosomal proteins, e.g. L4, L17, and L20. It is important during the early stages of 50S assembly. It makes multiple contacts with different domains of the 23S rRNA in the assembled 50S subunit and ribosome. In terms of biological role, the globular domain of the protein is located near the polypeptide exit tunnel on the outside of the subunit, while an extended beta-hairpin is found that lines the wall of the exit tunnel in the center of the 70S ribosome. This chain is Large ribosomal subunit protein uL22, found in Corynebacterium kroppenstedtii (strain DSM 44385 / JCM 11950 / CIP 105744 / CCUG 35717).